The sequence spans 452 residues: Coproporphyrinogen III oxidase, anaerobic 1 (452 aa).

One can recognise a Radical SAM core domain in the interval 45–278 (LDPAVPISVY…ANLAARLFTE (234 aa)). An S-adenosyl-L-methionine-binding site is contributed by Tyr-54. 2 residues coordinate [4Fe-4S] cluster: Cys-60 and Cys-64. Phe-66 contacts S-adenosyl-L-methionine. Cys-67 serves as a coordination point for [4Fe-4S] cluster. Residues Gly-111, 112 to 113 (GT), Glu-144, Gln-171, Arg-183, and Asp-208 each bind S-adenosyl-L-methionine.

It belongs to the anaerobic coproporphyrinogen-III oxidase family. Monomer. It depends on [4Fe-4S] cluster as a cofactor.

Its subcellular location is the cytoplasm. The catalysed reaction is coproporphyrinogen III + 2 S-adenosyl-L-methionine = protoporphyrinogen IX + 2 5'-deoxyadenosine + 2 L-methionine + 2 CO2. It functions in the pathway porphyrin-containing compound metabolism; protoporphyrin-IX biosynthesis; protoporphyrinogen-IX from coproporphyrinogen-III (AdoMet route): step 1/1. Its function is as follows. Anaerobic transformation of coproporphyrinogen III into protoporphyrinogen IX. Dedicated to bacteriochlorophyll biosynthesis. The chain is Coproporphyrinogen III oxidase, anaerobic 1 (hemN) from Cereibacter sphaeroides (strain ATCC 17023 / DSM 158 / JCM 6121 / CCUG 31486 / LMG 2827 / NBRC 12203 / NCIMB 8253 / ATH 2.4.1.) (Rhodobacter sphaeroides).